The chain runs to 269 residues: Hydroxyethylthiazole kinase (269 aa).

Residue methionine 46 coordinates substrate. Arginine 122 and threonine 168 together coordinate ATP. Glycine 195 contributes to the substrate binding site.

Belongs to the Thz kinase family. It depends on Mg(2+) as a cofactor.

It carries out the reaction 5-(2-hydroxyethyl)-4-methylthiazole + ATP = 4-methyl-5-(2-phosphooxyethyl)-thiazole + ADP + H(+). The protein operates within cofactor biosynthesis; thiamine diphosphate biosynthesis; 4-methyl-5-(2-phosphoethyl)-thiazole from 5-(2-hydroxyethyl)-4-methylthiazole: step 1/1. Functionally, catalyzes the phosphorylation of the hydroxyl group of 4-methyl-5-beta-hydroxyethylthiazole (THZ). This Chloroflexus aurantiacus (strain ATCC 29366 / DSM 635 / J-10-fl) protein is Hydroxyethylthiazole kinase.